Consider the following 453-residue polypeptide: MPDNDSHSLKSLPERQREDLFSAGSPSLEARKKQLSRLKTMIVDHEEAFTRALHADLGKPAFESFSSEIAVLLNEIDHVCKHIAKWNRQSRSRYLKMGYVESIKRKRHPYGSVLIIGSWNYPLQLSLMPAIGAIAAGNRCVIKPSEHAPATAELLKKIINDAFPPEQLLVVTGDAQTASHLTAAPFDLIFFTGSGQTGKAVAEQAARQLTPVILELGGKNPCIIDETGFSKEAVREIVWGKFLNAGQTCIAPDTLFVHQSVYEKMLNEISAAVSAFYGEQPRESSDYGRICTDDHFQKVIEFIGQGDVRHGGSYDRSDRFIAPTVLTDIEPGSPILQEEIFGPVLPVIPYTDMRTLLSSGRIQRDALTGYIFSKNKDNIQLFKEHMRSSTISVNQVIHHAASPHIAFGGVGTSGYGAYHGKAGFLAFSYEKQNTEHIITSIFKVNSRHILIQI.

Positions 1 to 20 are enriched in basic and acidic residues; sequence MPDNDSHSLKSLPERQREDL. Residues 1–23 form a disordered region; the sequence is MPDNDSHSLKSLPERQREDLFSA. Active-site residues include Glu-215 and Cys-249.

This sequence belongs to the aldehyde dehydrogenase family.

It catalyses the reaction all-trans-4,4'-diapolycopene-4,4'-dial + 2 A + 2 H2O = all-trans-4,4'-diapolycopene-4,4'-dioate + 2 AH2 + 2 H(+). It functions in the pathway carotenoid biosynthesis. In terms of biological role, involved in the biosynthesis of the major C30 carotenoid 4,4'-diapolycopene-4,4'-dioic acid, which protects B.firmus from peroxidative reactions. Catalyzes the oxidation of 4,4'-diapolycopene-4,4'-dial to yield 4,4'-diapolycopene-4,4'-dioic aci. The sequence is that of 4,4'-diapolycopene-4,4'-dial dehydrogenase from Cytobacillus firmus (Bacillus firmus).